We begin with the raw amino-acid sequence, 183 residues long: Capsid protein (183 aa).

Residues 150 to 183 (RQRGRTIRRRTPSPRRRRSQSPRRRRSQSRESQC) form a disordered region. Residues 151–176 (QRGRTIRRRTPSPRRRRSQSPRRRRS) are compositionally biased toward basic residues. Positions 158–175 (RRTPSPRRRRSQSPRRRR) match the Bipartite nuclear localization signal motif. 2 positions are modified to phosphoserine; by host: Ser162 and Ser170. Repeat copies occupy residues 162-169 (SPRRRRSQ) and 170-177 (SPRRRRSQ). Residues 162-177 (SPRRRRSQSPRRRRSQ) form a 2 X 8 AA repeats of S-P-R-R-R-[PR]-S-Q region. Positions 177 to 183 (QSRESQC) are RNA binding.

Belongs to the orthohepadnavirus core antigen family. As to quaternary structure, homodimerizes, then multimerizes. Interacts with cytosol exposed regions of viral L glycoprotein present in the reticulum-to-Golgi compartment. Interacts with human FLNB. Phosphorylated form interacts with host importin alpha; this interaction depends on the exposure of the NLS, which itself depends upon genome maturation and/or phosphorylation of the capsid protein. Interacts with host NUP153. In terms of processing, phosphorylated by host SRPK1, SRPK2, and maybe protein kinase C or GAPDH. Phosphorylation is critical for pregenomic RNA packaging. Protein kinase C phosphorylation is stimulated by HBx protein and may play a role in transport of the viral genome to the nucleus at the late step during the viral replication cycle.

The protein resides in the virion. Its subcellular location is the host cytoplasm. Its function is as follows. Self assembles to form an icosahedral capsid. Most capsids appear to be large particles with an icosahedral symmetry of T=4 and consist of 240 copies of capsid protein, though a fraction forms smaller T=3 particles consisting of 180 capsid proteins. Entering capsids are transported along microtubules to the nucleus. Phosphorylation of the capsid is thought to induce exposure of nuclear localization signal in the C-terminal portion of the capsid protein that allows binding to the nuclear pore complex via the importin (karyopherin-) alpha and beta. Capsids are imported in intact form through the nuclear pore into the nuclear basket, where it probably binds NUP153. Only capsids that contain the mature viral genome can release the viral DNA and capsid protein into the nucleoplasm. Immature capsids get stuck in the basket. Capsids encapsulate the pre-genomic RNA and the P protein. Pre-genomic RNA is reverse-transcribed into DNA while the capsid is still in the cytoplasm. The capsid can then either be directed to the nucleus, providing more genomes for transcription, or bud through the endoplasmic reticulum to provide new virions. In Homo sapiens (Human), this protein is Capsid protein.